We begin with the raw amino-acid sequence, 390 residues long: 1-deoxy-D-xylulose 5-phosphate reductoisomerase (390 aa).

Thr10, Gly11, Ser12, Val13, and Asn124 together coordinate NADPH. A 1-deoxy-D-xylulose 5-phosphate-binding site is contributed by Lys125. Residue Glu126 participates in NADPH binding. Asp150 serves as a coordination point for Mn(2+). 1-deoxy-D-xylulose 5-phosphate-binding residues include Ser151, Glu152, Ser181, and His204. Residue Glu152 coordinates Mn(2+). Residue Gly210 coordinates NADPH. Residues Ser217, Asn222, Lys223, and Glu226 each coordinate 1-deoxy-D-xylulose 5-phosphate. Glu226 contributes to the Mn(2+) binding site.

It belongs to the DXR family. Mg(2+) serves as cofactor. It depends on Mn(2+) as a cofactor.

The catalysed reaction is 2-C-methyl-D-erythritol 4-phosphate + NADP(+) = 1-deoxy-D-xylulose 5-phosphate + NADPH + H(+). Its pathway is isoprenoid biosynthesis; isopentenyl diphosphate biosynthesis via DXP pathway; isopentenyl diphosphate from 1-deoxy-D-xylulose 5-phosphate: step 1/6. Catalyzes the NADPH-dependent rearrangement and reduction of 1-deoxy-D-xylulose-5-phosphate (DXP) to 2-C-methyl-D-erythritol 4-phosphate (MEP). This is 1-deoxy-D-xylulose 5-phosphate reductoisomerase from Janthinobacterium sp. (strain Marseille) (Minibacterium massiliensis).